The chain runs to 302 residues: MRIVLITGISGSGKSVALNALEDAGYYCVDNLPPHVLPELARYLAEEGQHRLAVAIDARSSASLDEMPGLIRALSLEHDVRVLFLNASTQSLIQRFSETRRRHPLSGSPSHDANVGLLSSLEEAIERERELVAPLAEFGHQIDTSTLRANVLRTWVKRFIEQKNNDLMVMFESFGFKRGVPLDADLMFDVRALPNPYYDHELRPLTGLDQPVIAFLDALPIVHQMIDDIHAFLMKWLPHFREDNRSYLTVAIGCTGGQHRSVFIAETLAARLAHDANVIVRHRDAPVDVDASSRLVADVHRP.

Residue 8–15 (GISGSGKS) coordinates ATP. A GTP-binding site is contributed by 57–60 (DARS).

It belongs to the RapZ-like family.

Displays ATPase and GTPase activities. The protein is Nucleotide-binding protein Bcep1808_2900 of Burkholderia vietnamiensis (strain G4 / LMG 22486) (Burkholderia cepacia (strain R1808)).